Reading from the N-terminus, the 426-residue chain is Enolase (426 aa).

Glutamine 163 is a (2R)-2-phosphoglycerate binding site. Glutamate 205 serves as the catalytic Proton donor. Residues aspartate 242, glutamate 285, and aspartate 312 each contribute to the Mg(2+) site. Residues lysine 337, arginine 366, serine 367, and lysine 388 each contribute to the (2R)-2-phosphoglycerate site. Catalysis depends on lysine 337, which acts as the Proton acceptor.

Belongs to the enolase family. The cofactor is Mg(2+).

The protein resides in the cytoplasm. It localises to the secreted. It is found in the cell surface. The enzyme catalyses (2R)-2-phosphoglycerate = phosphoenolpyruvate + H2O. It participates in carbohydrate degradation; glycolysis; pyruvate from D-glyceraldehyde 3-phosphate: step 4/5. Catalyzes the reversible conversion of 2-phosphoglycerate (2-PG) into phosphoenolpyruvate (PEP). It is essential for the degradation of carbohydrates via glycolysis. This chain is Enolase, found in Gluconacetobacter diazotrophicus (strain ATCC 49037 / DSM 5601 / CCUG 37298 / CIP 103539 / LMG 7603 / PAl5).